We begin with the raw amino-acid sequence, 255 residues long: Glioma pathogenesis-related protein 1 (255 aa).

A signal peptide spans 1-17 (MQVILAVIVWMASSVSS). Positions 39-164 (QVHNQLRSKV…PNGANFICDY (126 aa)) constitute an SCP domain. A helical transmembrane segment spans residues 224 to 244 (SLFLIAKSVLLLLSVIITIWV).

Belongs to the CRISP family.

It localises to the membrane. The chain is Glioma pathogenesis-related protein 1 (Glipr1) from Mus musculus (Mouse).